A 498-amino-acid polypeptide reads, in one-letter code: Glutamate--tRNA ligase (498 aa).

Residues 11–21 (PSPTGHLHIGN) carry the 'HIGH' region motif. The short motif at 260 to 264 (KLSKR) is the 'KMSKS' region element. Lys-263 provides a ligand contact to ATP.

It belongs to the class-I aminoacyl-tRNA synthetase family. Glutamate--tRNA ligase type 1 subfamily. Monomer.

The protein localises to the cytoplasm. It carries out the reaction tRNA(Glu) + L-glutamate + ATP = L-glutamyl-tRNA(Glu) + AMP + diphosphate. In terms of biological role, catalyzes the attachment of glutamate to tRNA(Glu) in a two-step reaction: glutamate is first activated by ATP to form Glu-AMP and then transferred to the acceptor end of tRNA(Glu). The chain is Glutamate--tRNA ligase from Leuconostoc citreum (strain KM20).